A 319-amino-acid chain; its full sequence is DNA-directed RNA polymerase subunit alpha (319 aa).

The interval 1–227 (MKEFIFPMKI…KHMNMLTNIS (227 aa)) is alpha N-terminal domain (alpha-NTD). Positions 242 to 319 (LMEKLTFSIE…NIGEQRSSEV (78 aa)) are alpha C-terminal domain (alpha-CTD).

The protein belongs to the RNA polymerase alpha chain family. Homodimer. The RNAP catalytic core consists of 2 alpha, 1 beta, 1 beta' and 1 omega subunit. When a sigma factor is associated with the core the holoenzyme is formed, which can initiate transcription.

The enzyme catalyses RNA(n) + a ribonucleoside 5'-triphosphate = RNA(n+1) + diphosphate. Functionally, DNA-dependent RNA polymerase catalyzes the transcription of DNA into RNA using the four ribonucleoside triphosphates as substrates. This chain is DNA-directed RNA polymerase subunit alpha, found in Hydrogenobaculum sp. (strain Y04AAS1).